A 651-amino-acid polypeptide reads, in one-letter code: MEKTKDLADLSSLSERKRRDSFGMFDGYDSCSEDTSSSSSSDESEEEVAPLPSSLPIIKNNGQVYTYPDGKSGMATCEMCGMVGVRDAFYSKTKRFCSVSCSRSYSSNSKKASILARLQGKPPTKKAKVLQKKPLVAKLAAYAQYKATLKNQSVNKAPVTVEGFSWGNYITSNNTAAAPVTCFRHAPMGNCWGDIAEGVRVEVPNTDSNLPTKVFWISGIVKLAGFNALLRYEGFENDSSLDFWCNICGPDVHPVGWCATSGKPLVPPQTIQHKYTNWKAFLVKRLTGAKTLPPDFSQKVSESMQYPFKPSMRVEVVDKTHLCRTRVAVVDSVIGGRLRLVYEESEDKTDDFWCHMYSPLIHPIGWSRSIGHRFKRTDILKKQESNYDAPSHLFTKVKDIEQGSEWFKEGMKLEAIDPLNLSAICVATIRKVLADGYLMIGIDGSEAADGSDWFCYHASSPSIFPVGFCEINKIELTPPRGYTKLPFKWFDYLRETGSIAAPVKLFNKEVPNHGFRVGMKLEAVDLMEPRLVCVATVTRIIHRLLRIHFDGWEDEYDQWVDCESSDLYPVGWCQLTGYQLQPPAPQSNKDSQSNISKQKKKSKSQPYKGHKKITALQLKDEMLDGDDYTFLQGASDQESNGSGSYYIKQEP.

The disordered stretch occupies residues 21 to 55 (SFGMFDGYDSCSEDTSSSSSSDESEEEVAPLPSSL). The segment covering 29 to 41 (DSCSEDTSSSSSS) has biased composition (low complexity). Residues 68 to 103 (PDGKSGMATCEMCGMVGVRDAFYSKTKRFCSVSCSR) form an FCS-type zinc finger. Zn(2+) is bound by residues cysteine 77, cysteine 80, cysteine 97, and cysteine 101. 4 MBT repeats span residues 164-268 (FSWG…LVPP), 276-373 (TNWK…IGHR), 374-479 (FKRT…LTPP), and 487-583 (FKWF…LQPP). 2 disordered regions span residues 581–610 (QPPA…YKGH) and 629–651 (TFLQ…KQEP). Residues 586–596 (QSNKDSQSNIS) are compositionally biased toward low complexity. The segment covering 597–610 (KQKKKSKSQPYKGH) has biased composition (basic residues). The span at 632–643 (QGASDQESNGSG) shows a compositional bias: polar residues.

Monomer. Component of the NuA4 histone acetyltransferase complex.

Its subcellular location is the nucleus. It localises to the chromosome. Its function is as follows. Chromatin reader component of the NuA4 histone acetyltransferase complex, a multiprotein complex involved in transcriptional activation of select genes principally by acetylation of nucleosomal histones H4 and H2A. The NuA4 complex plays a direct role in repair of DNA double-strand breaks (DSBs) by promoting homologous recombination (HR). MBTD1 specifically recognizes and binds monomethylated and dimethylated 'Lys-20' on histone H4 (H4K20me1 and H4K20me2, respectively). In the NuA4 complex, MBTD1 promotes recruitment of the complex to H4K20me marks by competing with TP53BP1 for binding to H4K20me. Following recruitment to H4K20me at DNA breaks, the NuA4 complex catalyzes acetylation of 'Lys-15' on histone H2A (H2AK15), blocking the ubiquitination mark required for TP53BP1 localization at DNA breaks, thereby promoting homologous recombination (HR). The sequence is that of MBT domain-containing protein 1 from Xenopus tropicalis (Western clawed frog).